We begin with the raw amino-acid sequence, 874 residues long: Alanine--tRNA ligase (874 aa).

Positions 563, 567, 665, and 669 each coordinate Zn(2+).

Belongs to the class-II aminoacyl-tRNA synthetase family. Requires Zn(2+) as cofactor.

It localises to the cytoplasm. The enzyme catalyses tRNA(Ala) + L-alanine + ATP = L-alanyl-tRNA(Ala) + AMP + diphosphate. Its function is as follows. Catalyzes the attachment of alanine to tRNA(Ala) in a two-step reaction: alanine is first activated by ATP to form Ala-AMP and then transferred to the acceptor end of tRNA(Ala). Also edits incorrectly charged Ser-tRNA(Ala) and Gly-tRNA(Ala) via its editing domain. The polypeptide is Alanine--tRNA ligase (Actinobacillus pleuropneumoniae serotype 5b (strain L20)).